We begin with the raw amino-acid sequence, 487 residues long: Keratin, type I cytoskeletal 12 (487 aa).

Residues 1 to 118 are head; sequence MSLSVCTSAL…GNDGGLLSGS (118 aa). Positions 119-154 are coil 1A; it reads EKETMQNLNDRLASYLGKVRSLEEANAELENKIREW. The IF rod domain maps to 119-433; the sequence is EKETMQNLND…RLLEGDSQGD (315 aa). Residues 158–175 are linker 1; sequence RRTRDAGSQSDYSKYYPL. The tract at residues 176 to 267 is coil 1B; it reads IEDLKNKIVS…KNHEEELQSF (92 aa). The tract at residues 268-290 is linker 12; the sequence is QAGGPGEVNVEMDAAPGVDLTKV. The interval 291 to 428 is coil 2; it reads LNEMRAQYEA…IETYRRLLEG (138 aa). The interval 428 to 461 is disordered; it reads GDSQGDGFDESSSLSVSKPQTPSVDSSKDPNKTR. A tail region spans residues 429–487; that stretch reads DSQGDGFDESSSLSVSKPQTPSVDSSKDPNKTRKIKTVVQEIVNGEVVSSQVQELEEEM. Residues 437–452 are compositionally biased toward polar residues; it reads ESSSLSVSKPQTPSVD.

The protein belongs to the intermediate filament family. As to quaternary structure, heterotetramer of two type I and two type II keratins. Keratin-3 associates with keratin-12. In terms of tissue distribution, expressed in the corneal epithelium (at protein level). Also expressed in the suprabasal limbal epithelium of the cornea (at protein level).

In terms of biological role, involved in corneal epithelium organization, integrity and corneal keratin expression. The sequence is that of Keratin, type I cytoskeletal 12 (Krt12) from Mus musculus (Mouse).